The chain runs to 447 residues: MTDNKYLTVTDLNYYITQKFKNDPYLHKVFLQGELSNFRYRRNSHQYFSLKDEKSKINVVMFRSYFDKVKFKPEEGMKVYVVGYVSVYGPQGSYQFYAENMEPAGLGALYEQLKQLQAKLAKEGLFNPEHKRKLPRFPDKIAVVTSASGAVIHDIMVTANRRFPHAEIDLFPAQVQGDTAADSLVKAMRQIAAQGDEYDVMIIGRGGGSLEDLWSFNEEEVVRQVYAMPMPVISSVGHETDTTLCDLVADARAATPTAAAEYATPNLADELAGIHQLQSRLIAGMQNNINQKRDRLNRIKNSVIMREPTRLYDQQIQQVDLLKQRLQNSIQNKVNNSLQNYRLLKQRLLSVSPDKQIAGMEQQEKFLAKQLNDNMKHYLKNKRSDFSKIVQQLDDYSPLKTLERGFVYTTNEEGETVSSVDQIKKDDHLNLHFKDGEVTATVTEVKK.

It belongs to the XseA family. As to quaternary structure, heterooligomer composed of large and small subunits.

The protein resides in the cytoplasm. The enzyme catalyses Exonucleolytic cleavage in either 5'- to 3'- or 3'- to 5'-direction to yield nucleoside 5'-phosphates.. Its function is as follows. Bidirectionally degrades single-stranded DNA into large acid-insoluble oligonucleotides, which are then degraded further into small acid-soluble oligonucleotides. In Lactobacillus helveticus (strain DPC 4571), this protein is Exodeoxyribonuclease 7 large subunit.